A 384-amino-acid polypeptide reads, in one-letter code: 8-amino-7-oxononanoate synthase (384 aa).

Arg-21 is a substrate binding site. Position 108–109 (108–109) interacts with pyridoxal 5'-phosphate; that stretch reads GF. His-133 contacts substrate. Ser-179, His-207, and Thr-233 together coordinate pyridoxal 5'-phosphate. Lys-236 is subject to N6-(pyridoxal phosphate)lysine. Residue Thr-352 coordinates substrate.

This sequence belongs to the class-II pyridoxal-phosphate-dependent aminotransferase family. BioF subfamily. Homodimer. Pyridoxal 5'-phosphate serves as cofactor.

The catalysed reaction is 6-carboxyhexanoyl-[ACP] + L-alanine + H(+) = (8S)-8-amino-7-oxononanoate + holo-[ACP] + CO2. It functions in the pathway cofactor biosynthesis; biotin biosynthesis. Functionally, catalyzes the decarboxylative condensation of pimeloyl-[acyl-carrier protein] and L-alanine to produce 8-amino-7-oxononanoate (AON), [acyl-carrier protein], and carbon dioxide. This chain is 8-amino-7-oxononanoate synthase, found in Escherichia coli O6:K15:H31 (strain 536 / UPEC).